The primary structure comprises 1032 residues: Structural polyprotein (1032 aa).

Asp23 is a binding site for a divalent metal cation. A Peptidase S50 domain is found at 501–723 (ADSPLGEEHW…QTLPHWTAGS (223 aa)). The active-site Nucleophile is the Ser627. Residue Lys670 is part of the active site. The segment at 986–1014 (LVNQPATAPRVPPRRIVSAQTAQTDPPGR) is disordered. The tract at residues 1021-1030 (LRRVRGEDND) is interaction with VP1 protein.

As to quaternary structure, homotrimer. A central divalent metal stabilizes the VP2 trimer. Homodimer. Interacts (via C-terminus) with VP1 in the cytoplasm. Capsid VP3 interacts with VP2. Post-translationally, specific enzymatic cleavages yield mature proteins. The capsid assembly seems to be regulated by polyprotein processing. The protease VP4 cleaves itself off the polyprotein, thus releasing pre-VP2 and VP3 within the infected cell. During capsid assembly, the C-terminus of pre-VP2 is further processed by VP4, giving rise to VP2, the external capsid protein and three small peptides that all stay closely associated with the capsid.

The protein localises to the virion. It localises to the host cytoplasm. In terms of biological role, capsid protein VP2 self assembles to form an icosahedral capsid with a T=13 symmetry, about 70 nm in diameter, and consisting of 260 VP2 trimers. The capsid encapsulates the genomic dsRNA. VP2 is also involved in attachment and entry into the host cell. The precursor of VP2 plays an important role in capsid assembly. First, pre-VP2 and VP2 oligomers assemble to form a procapsid. Then, the pre-VP2 intermediates may be processed into VP2 proteins by proteolytic cleavage mediated by VP4 to obtain the mature virion. The final capsid is composed of pentamers and hexamers but VP2 has a natural tendency to assemble into all-pentameric structures. Therefore pre-VP2 may be required to allow formation of the hexameric structures. Functionally, protease VP4 is a serine protease that cleaves the polyprotein into its final products. Pre-VP2 is first partially cleaved, and may be completely processed by VP4 upon capsid maturation. Its function is as follows. Capsid protein VP3 plays a key role in virion assembly by providing a scaffold for the capsid made of VP2. May self-assemble to form a T=4-like icosahedral inner-capsid composed of at least 180 trimers. Plays a role in genomic RNA packaging by recruiting VP1 into the capsid and interacting with the dsRNA genome segments to form a ribonucleoprotein complex. Additionally, the interaction of the VP3 C-terminal tail with VP1 removes the inherent structural blockade of the polymerase active site. Thus, VP3 can also function as a transcriptional activator. In terms of biological role, structural peptide 1 is a small peptide derived from pre-VP2 C-terminus. It destabilizes and perforates cell membranes, suggesting a role during entry. Structural peptide 2 is a small peptide derived from pre-VP2 C-terminus. It is not essential for the virus viability, but viral growth is affected when missing. Functionally, structural peptide 3 is a small peptide derived from pre-VP2 C-terminus. It is not essential for the virus viability, but viral growth is affected when missing. This chain is Structural polyprotein, found in Drosophila melanogaster (Fruit fly).